A 476-amino-acid polypeptide reads, in one-letter code: MLAPDTFWLACLEYFENELSAQQFNTWIKPLRLQLSDDSPEPALRLIAPNRFVLQWVKDNFLSDITQMAENHFARPVQLQLELAGQIPASASPSTGRNNGTASHSITAVFDAPTESAQKAPKDTKDTKDAKEKQEKNPTRLNPSFTFNTFVTGKANQLARAGAIQVAERPGVAYNPFFIYGGVGLGKTHLIQAIGNFVVEQNPAAKVRYIHSEQYVSDVVRAYQHKAFDEFKRYYHSLDLLLIDDIQFFGGKNRTQEEFFYAFNALIEAHKQVIITCDSYPKEIAGMEERLISRFGWGLTVAVEPPELEMRVAILLKKALMEDIILDESVAFFIAKHIRSNVRELEGALKRVVAYSRFTGHALTLDLAREALKDLLAVQNRQISIENIQKTVADYYKIKVAEMYSKKRSRVVARPRQMAMAISKELTPLSLPDIGEAFGGRDHTTVLHGYRKIAELRASDPAVNRDFNTLLHILRG.

Residues 1–75 (MLAPDTFWLA…TQMAENHFAR (75 aa)) form a domain I, interacts with DnaA modulators region. The interval 75–139 (RPVQLQLELA…AKEKQEKNPT (65 aa)) is domain II. Positions 110 to 141 (FDAPTESAQKAPKDTKDTKDAKEKQEKNPTRL) are disordered. Positions 120 to 138 (APKDTKDTKDAKEKQEKNP) are enriched in basic and acidic residues. The domain III, AAA+ region stretch occupies residues 140–356 (RLNPSFTFNT…GALKRVVAYS (217 aa)). ATP-binding residues include G184, G186, K187, and T188. The tract at residues 357–476 (RFTGHALTLD…FNTLLHILRG (120 aa)) is domain IV, binds dsDNA.

This sequence belongs to the DnaA family. As to quaternary structure, oligomerizes as a right-handed, spiral filament on DNA at oriC.

The protein resides in the cytoplasm. Functionally, plays an essential role in the initiation and regulation of chromosomal replication. ATP-DnaA binds to the origin of replication (oriC) to initiate formation of the DNA replication initiation complex once per cell cycle. Binds the DnaA box (a 9 base pair repeat at the origin) and separates the double-stranded (ds)DNA. Forms a right-handed helical filament on oriC DNA; dsDNA binds to the exterior of the filament while single-stranded (ss)DNA is stabiized in the filament's interior. The ATP-DnaA-oriC complex binds and stabilizes one strand of the AT-rich DNA unwinding element (DUE), permitting loading of DNA polymerase. After initiation quickly degrades to an ADP-DnaA complex that is not apt for DNA replication. Binds acidic phospholipids. This is Chromosomal replication initiator protein DnaA from Nitrosospira multiformis (strain ATCC 25196 / NCIMB 11849 / C 71).